Reading from the N-terminus, the 337-residue chain is Large ribosomal subunit protein uL3 (337 aa).

Belongs to the universal ribosomal protein uL3 family. As to quaternary structure, part of the 50S ribosomal subunit. Forms a cluster with proteins L14 and L24e.

In terms of biological role, one of the primary rRNA binding proteins, it binds directly near the 3'-end of the 23S rRNA, where it nucleates assembly of the 50S subunit. The sequence is that of Large ribosomal subunit protein uL3 from Methanosphaerula palustris (strain ATCC BAA-1556 / DSM 19958 / E1-9c).